The primary structure comprises 152 residues: D-aminoacyl-tRNA deacylase 1 (152 aa).

The Gly-cisPro motif, important for rejection of L-amino acids motif lies at 140 to 141 (GP).

It belongs to the DTD family. As to quaternary structure, homodimer.

It localises to the cytoplasm. The catalysed reaction is glycyl-tRNA(Ala) + H2O = tRNA(Ala) + glycine + H(+). It carries out the reaction a D-aminoacyl-tRNA + H2O = a tRNA + a D-alpha-amino acid + H(+). Its function is as follows. An aminoacyl-tRNA editing enzyme that deacylates mischarged D-aminoacyl-tRNAs. Hydrolyzes correctly charged, achiral, glycyl-tRNA(Gly). Deacylates mischarged D.melanogaster and E.coli glycyl-tRNA(Ala), protecting cells against glycine mischarging by AlaRS. Acts via tRNA-based rather than protein-based catalysis; rejects L-amino acids rather than detecting D-amino acids in the active site. By recycling D-aminoacyl-tRNA to D-amino acids and free tRNA molecules, this enzyme counteracts the toxicity associated with the formation of D-aminoacyl-tRNA entities in vivo and helps enforce protein L-homochirality. This chain is D-aminoacyl-tRNA deacylase 1 (dtd1), found in Leishmania major.